A 317-amino-acid polypeptide reads, in one-letter code: Acetyl-coenzyme A carboxylase carboxyl transferase subunit alpha (317 aa).

Residues 33–294 (NLDDEIARLQ…KQRLLEDLAD (262 aa)) enclose the CoA carboxyltransferase C-terminal domain.

It belongs to the AccA family. As to quaternary structure, acetyl-CoA carboxylase is a heterohexamer composed of biotin carboxyl carrier protein (AccB), biotin carboxylase (AccC) and two subunits each of ACCase subunit alpha (AccA) and ACCase subunit beta (AccD).

It is found in the cytoplasm. It carries out the reaction N(6)-carboxybiotinyl-L-lysyl-[protein] + acetyl-CoA = N(6)-biotinyl-L-lysyl-[protein] + malonyl-CoA. It functions in the pathway lipid metabolism; malonyl-CoA biosynthesis; malonyl-CoA from acetyl-CoA: step 1/1. Functionally, component of the acetyl coenzyme A carboxylase (ACC) complex. First, biotin carboxylase catalyzes the carboxylation of biotin on its carrier protein (BCCP) and then the CO(2) group is transferred by the carboxyltransferase to acetyl-CoA to form malonyl-CoA. The polypeptide is Acetyl-coenzyme A carboxylase carboxyl transferase subunit alpha (Glaesserella parasuis serovar 5 (strain SH0165) (Haemophilus parasuis)).